An 833-amino-acid chain; its full sequence is Heat shock transcription factor (833 aa).

M1 is modified (N-acetylmethionine). The segment covering 1–16 (MNNAANTGTTNESNVS) has biased composition (polar residues). Disordered regions lie at residues 1 to 31 (MNNA…NDDD) and 62 to 92 (NPSL…STHL). A compositionally biased stretch (low complexity) spans 69 to 80 (SAASPVPSSSFF). Residue T97 is modified to Phosphothreonine. A compositionally biased stretch (polar residues) spans 150–161 (PSSGTTNAQPRQ). Disordered stretches follow at residues 150–170 (PSSG…QSHK) and 277–309 (GSSN…NNSN). The DNA-binding element occupies 170 to 259 (KSRPAFVNKL…SDDKWQFENE (90 aa)). Residues 260 to 280 (NFIRGREDLLEKIIRQKGSSN) form a flexible linker region. Residues 277 to 296 (GSSNNHNSPSGNGNPANGSN) show a composition bias toward low complexity. Residues 350–403 (ELEQIKYNQIAISKDLLRINKDNELLWQENMMARERHRTQQQALEKMFRFLTSI) form an involved in trimerization region. Residues 447–457 (SNDSFINDDRN) are compositionally biased toward basic and acidic residues. Positions 447 to 493 (SNDSFINDDRNSFTNATTNARNNMSPNNDDNSIDTASTNTTNRKKNI) are disordered. 5 positions are modified to phosphoserine: S450, S458, S471, S478, and S528. Residues 458-487 (SFTNATTNARNNMSPNNDDNSIDTASTNTT) show a composition bias toward polar residues. A compositionally biased stretch (polar residues) spans 542 to 554 (RANSSTSSENPSL). Disordered regions lie at residues 542–626 (RANS…HNES), 657–765 (GYPN…RVSP), and 778–799 (SDNL…APEN). Positions 571 to 580 (PFDDEEEEET) are enriched in acidic residues. Positions 588 to 600 (RDPNNQTSENTFD) are enriched in polar residues. A compositionally biased stretch (basic and acidic residues) spans 610–626 (DDLKKDSHTNDNKHNES). Low complexity predominate over residues 660-675 (NKSFNNKTSSTNTNSN). Residues 676-687 (MESAVNVNSPGF) show a composition bias toward polar residues. Residues 697–713 (SNSPNSVHSVPSNGSGS) show a composition bias toward low complexity. 3 stretches are compositionally biased toward polar residues: residues 727 to 739 (ASTS…NGSG), 752 to 763 (NDNNTSEGSTRV), and 778 to 794 (SDNL…TQAD).

This sequence belongs to the HSF family. In terms of assembly, homotrimer. Homotrimerization increases the affinity of HSF1 to DNA. In terms of processing, exhibits temperature-dependent phosphorylation that activates the transcriptional capacity.

It localises to the nucleus. Functionally, DNA-binding transcription factor that specifically binds heat shock promoter elements (HSE) and activates transcription. The protein is Heat shock transcription factor of Saccharomyces cerevisiae (strain ATCC 204508 / S288c) (Baker's yeast).